Reading from the N-terminus, the 323-residue chain is Phosphate acyltransferase (323 aa).

Belongs to the PlsX family. In terms of assembly, homodimer. Probably interacts with PlsY.

It is found in the cytoplasm. It carries out the reaction a fatty acyl-[ACP] + phosphate = an acyl phosphate + holo-[ACP]. It functions in the pathway lipid metabolism; phospholipid metabolism. Its function is as follows. Catalyzes the reversible formation of acyl-phosphate (acyl-PO(4)) from acyl-[acyl-carrier-protein] (acyl-ACP). This enzyme utilizes acyl-ACP as fatty acyl donor, but not acyl-CoA. This is Phosphate acyltransferase from Finegoldia magna (strain ATCC 29328 / DSM 20472 / WAL 2508) (Peptostreptococcus magnus).